Consider the following 283-residue polypeptide: Diaminopimelate epimerase (283 aa).

Asn-13, Gln-45, and Asn-65 together coordinate substrate. The active-site Proton donor is Cys-74. Residues 75–76 (GN), Asn-156, Asn-190, and 208–209 (ER) each bind substrate. Catalysis depends on Cys-217, which acts as the Proton acceptor. 218–219 (GS) contacts substrate.

This sequence belongs to the diaminopimelate epimerase family. As to quaternary structure, homodimer.

It localises to the cytoplasm. It catalyses the reaction (2S,6S)-2,6-diaminopimelate = meso-2,6-diaminopimelate. It participates in amino-acid biosynthesis; L-lysine biosynthesis via DAP pathway; DL-2,6-diaminopimelate from LL-2,6-diaminopimelate: step 1/1. In terms of biological role, catalyzes the stereoinversion of LL-2,6-diaminopimelate (L,L-DAP) to meso-diaminopimelate (meso-DAP), a precursor of L-lysine and an essential component of the bacterial peptidoglycan. The protein is Diaminopimelate epimerase of Bartonella quintana (strain Toulouse) (Rochalimaea quintana).